A 253-amino-acid chain; its full sequence is Negative modulator of initiation of replication (253 aa).

Residues 66–112 (SNQEQQTGHGHAGEPSAVQTPESNDYAKAQPHSSGYQPGQLEGHKSE) form a disordered region. The segment at 154–155 (AV) is interaction with DNA.

Belongs to the SeqA family. As to quaternary structure, homodimer. Polymerizes to form helical filaments.

It is found in the cytoplasm. In terms of biological role, negative regulator of replication initiation, which contributes to regulation of DNA replication and ensures that replication initiation occurs exactly once per chromosome per cell cycle. Binds to pairs of hemimethylated GATC sequences in the oriC region, thus preventing assembly of replication proteins and re-initiation at newly replicated origins. Repression is relieved when the region becomes fully methylated. The polypeptide is Negative modulator of initiation of replication (Shewanella denitrificans (strain OS217 / ATCC BAA-1090 / DSM 15013)).